Here is a 592-residue protein sequence, read N- to C-terminus: Putative esterase (592 aa).

The helical transmembrane segment at 12-32 (LTLIAYLSVLMGVSVYFYVLI) threads the bilayer. N-linked (GlcNAc...) asparagine; by host glycans are attached at residues Asn-68, Asn-83, Asn-95, Asn-447, and Asn-510. Residue His-513 is the Charge relay system of the active site. Asn-528 is a glycosylation site (N-linked (GlcNAc...) asparagine; by host).

It belongs to the type-B carboxylesterase/lipase family.

The protein localises to the membrane. The catalysed reaction is a carboxylic ester + H2O = an alcohol + a carboxylate + H(+). In Spodoptera frugiperda (Fall armyworm), this protein is Putative esterase.